The following is a 445-amino-acid chain: Cytochrome P450 monooxygenase penB (445 aa).

Residue Cys-381 participates in heme binding.

The protein belongs to the cytochrome P450 family. Requires heme as cofactor.

It participates in secondary metabolite biosynthesis. Its pathway is alkaloid biosynthesis. The protein operates within mycotoxin biosynthesis. Functionally, cytochrome P450 monooxygenase; part of the gene cluster that mediates the biosynthesis of penigequinolones, potent insecticidal alkaloids that contain a highly modified 10-carbon prenyl group. The first stage is catalyzed by the nonribosomal peptide synthetase penN that condenses anthranilic acid and O-methyl-L-tyrosine to produce 4'-methoxycyclopeptin. 4'-methoxycyclopeptin is then converted to 4'-methoxydehydrocyclopeptin by the ketoglutarate-dependent dioxygenase penM through dehydrogenation to form a double bond between C-alpha and C-beta of the O-methyltyrosine side chain. PenM also converts its first product methoxydehydrocyclopeptin to 4'-methoxycyclopenin. The following conversion of 4'methoxycyclopenin into 4'-methoxyviridicatin is catalyzed by the cyclopenase penL. 4'-methoxyviridicatin is the precursor of quinolone natural products, and is further converted to quinolinone B. The prenyltransferase penI then catalyzes the canonical Friedel-Crafts alkylation of quinolinone B with dimethylallyl cation to yield dimethylallyl quinolone, which is subjected to FAD-dependent dehydrogenation by the FAD-linked oxidoreductase penH to yield conjugated aryl diene. The delta(3') double bond then serves as the site of the second alkylation with DMAPP catalyzed by the prenyltransferase penG to yield a carbenium ion intermediate, which can be attacked by H(2)O to yield a styrenyl quinolone containing a C3'-hydroxyprenyl chain, or undergo cyclization to yield yaequinolones J1 and J2. The conversion of the styrenyl quinolone into the tetrahydrofuran-containing yaequinolone C is performed by the FAD-dependent monooxygenase penE and involves epoxidation of the terminal C7'-C8' olefin, followed by epoxide ring opening initiated by the C3' hydroxyl group. The predicted cysteine hydrolase penJ acts as an epoxide hydrolase that enhances the rate of the 5-exo-tet cyclization step, increasing the yield of yaequinolone C. PenF catalyzes the cationic rearrangement of the epoxide formed by penE (before ring opening to produce yaequinolone C) into yaequinolone D. Finally, the short-chain dehydrogenase/reductase (SDR)-like reductase penD, catalyzes both the dehydration of yaequinolone D and the reduction of the resulting oxonium to yield penigequinolone. The chain is Cytochrome P450 monooxygenase penB from Penicillium thymicola.